The chain runs to 255 residues: Imidazole glycerol phosphate synthase subunit HisF (255 aa).

Residues Asp11 and Asp130 contribute to the active site.

It belongs to the HisA/HisF family. Heterodimer of HisH and HisF.

Its subcellular location is the cytoplasm. It carries out the reaction 5-[(5-phospho-1-deoxy-D-ribulos-1-ylimino)methylamino]-1-(5-phospho-beta-D-ribosyl)imidazole-4-carboxamide + L-glutamine = D-erythro-1-(imidazol-4-yl)glycerol 3-phosphate + 5-amino-1-(5-phospho-beta-D-ribosyl)imidazole-4-carboxamide + L-glutamate + H(+). Its pathway is amino-acid biosynthesis; L-histidine biosynthesis; L-histidine from 5-phospho-alpha-D-ribose 1-diphosphate: step 5/9. Its function is as follows. IGPS catalyzes the conversion of PRFAR and glutamine to IGP, AICAR and glutamate. The HisF subunit catalyzes the cyclization activity that produces IGP and AICAR from PRFAR using the ammonia provided by the HisH subunit. The sequence is that of Imidazole glycerol phosphate synthase subunit HisF from Campylobacter jejuni subsp. jejuni serotype O:6 (strain 81116 / NCTC 11828).